The chain runs to 456 residues: RuvB-like helicase 1 (456 aa).

Position 70–77 (70–77 (GPPGTGKT)) interacts with ATP.

This sequence belongs to the RuvB family. As to quaternary structure, forms homohexameric rings. May form a dodecamer with rept made of two stacked hexameric rings. Component of the chromatin remodeling Ino80 complex.

The protein localises to the nucleus. The enzyme catalyses ATP + H2O = ADP + phosphate + H(+). Acts as a transcriptional coactivator in Wg signaling caused by altered arm signaling. Pont and rept interfere antagonistically with nuclear arm signaling function, and are required to enhance or reduce arm activity, respectively. Also an essential cofactor for the normal function of Myc; required for cellular proliferation and growth. Functionally, proposed core component of the chromatin remodeling Ino80 complex which is involved in transcriptional regulation, DNA replication and probably DNA repair. The protein is RuvB-like helicase 1 of Drosophila pseudoobscura pseudoobscura (Fruit fly).